We begin with the raw amino-acid sequence, 33 residues long: MSDINATRLPLILLAALGIPSDDADSTLTRGER.

Positions 1–10 (MSDINATRLP) are excised as a propeptide. Positions 11 to 20 (LILLAALGIP) form a cross-link, cyclopeptide (Leu-Pro). The propeptide occupies 21-33 (SDDADSTLTRGER).

It belongs to the MSDIN fungal toxin family. Processed by the macrocyclase-peptidase enzyme POPB to yield a toxic cyclic decapeptide. POPB first removes 10 residues from the N-terminus. Conformational trapping of the remaining peptide forces the enzyme to release this intermediate rather than proceed to macrocyclization. The enzyme rebinds the remaining peptide in a different conformation and catalyzes macrocyclization of the N-terminal 10 residues.

Its function is as follows. Probable toxin that belongs to the MSDIN-like toxin family responsible for a large number of food poisoning cases and deaths. The chain is MSDIN-like toxin proprotein 6 from Amanita phalloides (Death cap).